The primary structure comprises 445 residues: Chromosome partition protein MukF (445 aa).

Residues 213-241 (LSETSSTLRELQDTLQAASDELQTQILDI) are leucine-zipper.

It belongs to the MukF family. In terms of assembly, interacts, and probably forms a ternary complex, with MukE and MukB via its C-terminal region. The complex formation is stimulated by calcium or magnesium. It is required for an interaction between MukE and MukB.

Its subcellular location is the cytoplasm. The protein resides in the nucleoid. In terms of biological role, involved in chromosome condensation, segregation and cell cycle progression. May participate in facilitating chromosome segregation by condensation DNA from both sides of a centrally located replisome during cell division. Not required for mini-F plasmid partitioning. Probably acts via its interaction with MukB and MukE. Overexpression results in anucleate cells. It has a calcium binding activity. In Vibrio campbellii (strain ATCC BAA-1116), this protein is Chromosome partition protein MukF.